The following is a 60-amino-acid chain: Large ribosomal subunit protein bL32 (60 aa).

Belongs to the bacterial ribosomal protein bL32 family.

This chain is Large ribosomal subunit protein bL32, found in Hydrogenobaculum sp. (strain Y04AAS1).